We begin with the raw amino-acid sequence, 195 residues long: Mannitol operon repressor (195 aa).

It belongs to the MtlR/FumE family. Homodimer. Can also form higher level multimer aggregates.

In terms of biological role, involved in the repression of the expression of the mannitol mtlADR operon. Does not bind the operator/promoter regulatory region of this operon. Therefore, seems to belong to a new class of transcription factors in bacteria that may regulate gene expression indirectly, perhaps as a part of a larger transcriptional complex. In Escherichia coli O6:H1 (strain CFT073 / ATCC 700928 / UPEC), this protein is Mannitol operon repressor.